Consider the following 1007-residue polypeptide: Bifunctional glutamine synthetase adenylyltransferase/adenylyl-removing enzyme (1007 aa).

Residues 1 to 496 (MTREQLSLTV…LHERLFYRPL (496 aa)) are adenylyl removase. An adenylyl transferase region spans residues 505 to 1007 (NEDARLSGEA…GPPQRPATTA (503 aa)).

The protein belongs to the GlnE family. The cofactor is Mg(2+).

The enzyme catalyses [glutamine synthetase]-O(4)-(5'-adenylyl)-L-tyrosine + phosphate = [glutamine synthetase]-L-tyrosine + ADP. It catalyses the reaction [glutamine synthetase]-L-tyrosine + ATP = [glutamine synthetase]-O(4)-(5'-adenylyl)-L-tyrosine + diphosphate. Functionally, involved in the regulation of glutamine synthetase GlnA, a key enzyme in the process to assimilate ammonia. When cellular nitrogen levels are high, the C-terminal adenylyl transferase (AT) inactivates GlnA by covalent transfer of an adenylyl group from ATP to specific tyrosine residue of GlnA, thus reducing its activity. Conversely, when nitrogen levels are low, the N-terminal adenylyl removase (AR) activates GlnA by removing the adenylyl group by phosphorolysis, increasing its activity. The regulatory region of GlnE binds the signal transduction protein PII (GlnB) which indicates the nitrogen status of the cell. This is Bifunctional glutamine synthetase adenylyltransferase/adenylyl-removing enzyme from Leifsonia xyli subsp. xyli (strain CTCB07).